We begin with the raw amino-acid sequence, 619 residues long: Elongation factor 4 (619 aa).

Residues 17–198 form the tr-type G domain; the sequence is SVIRNFCIIA…RVVRAIPGPE (182 aa). GTP is bound by residues 29-34 and 145-148; these read DHGKST and NKID.

It belongs to the TRAFAC class translation factor GTPase superfamily. Classic translation factor GTPase family. LepA subfamily.

It is found in the cell membrane. The catalysed reaction is GTP + H2O = GDP + phosphate + H(+). In terms of biological role, required for accurate and efficient protein synthesis under certain stress conditions. May act as a fidelity factor of the translation reaction, by catalyzing a one-codon backward translocation of tRNAs on improperly translocated ribosomes. Back-translocation proceeds from a post-translocation (POST) complex to a pre-translocation (PRE) complex, thus giving elongation factor G a second chance to translocate the tRNAs correctly. Binds to ribosomes in a GTP-dependent manner. The polypeptide is Elongation factor 4 (Micrococcus luteus (strain ATCC 4698 / DSM 20030 / JCM 1464 / CCM 169 / CCUG 5858 / IAM 1056 / NBRC 3333 / NCIMB 9278 / NCTC 2665 / VKM Ac-2230) (Micrococcus lysodeikticus)).